The sequence spans 251 residues: Hydroxyacylglutathione hydrolase (251 aa).

H53, H55, D57, H58, H110, D127, and H165 together coordinate Zn(2+).

It belongs to the metallo-beta-lactamase superfamily. Glyoxalase II family. In terms of assembly, monomer. Requires Zn(2+) as cofactor.

The catalysed reaction is an S-(2-hydroxyacyl)glutathione + H2O = a 2-hydroxy carboxylate + glutathione + H(+). It participates in secondary metabolite metabolism; methylglyoxal degradation; (R)-lactate from methylglyoxal: step 2/2. In terms of biological role, thiolesterase that catalyzes the hydrolysis of S-D-lactoyl-glutathione to form glutathione and D-lactic acid. This Salmonella paratyphi C (strain RKS4594) protein is Hydroxyacylglutathione hydrolase.